We begin with the raw amino-acid sequence, 468 residues long: MAPPPARVHLGAFLAVTPNPGSAASGTEAAAATPSKVWGSSAGRIEPRGGGRGALPTSMGQHGPSARARAGRAPGPRPAREASPRLRVHKTFKFVVVGVLLQVVPSSAATIKLHDQSIGTQQWEHSPLGELCPPGSHRSEHPGACNRCTEGVGYTNASNNLFACLPCTACKSDEEERSPCTTTRNTACQCKPGTFRNDNSAEMCRKCSRGCPRGMVKVKDCTPWSDIECVHKESGNGHNIWVILVVTLVVPLLLVAVLIVCCCIGSGCGGDPKCMDRVCFWRLGLLRGPGAEDNAHNEILSNADSLSTFVSEQQMESQEPADLTGVTVQSPGEAQCLLGPAEAEGSQRRRLLVPANGADPTETLMLFFDKFANIVPFDSWDQLMRQLDLTKNEIDVVRAGTAGPGDALYAMLMKWVNKTGRNASIHTLLDALERMEERHAREKIQDLLVDSGKFIYLEDGTGSAVSLE.

Positions Met1–Ala23 are cleaved as a signal peptide. A disordered region spans residues Thr17–Ala82. The span at Pro20–Pro34 shows a compositional bias: low complexity. Residues Ala24–Asn239 are Extracellular-facing. Arg52 bears the Omega-N-methylarginine mark. Low complexity predominate over residues Gly63–Pro74. 3 TNFR-Cys repeats span residues Ser107 to Cys145, Arg147 to Cys188, and Gln189 to Cys229. 7 disulfides stabilise this stretch: Cys132–Cys145, Cys148–Cys164, Cys167–Cys180, Cys170–Cys188, Cys190–Cys204, Cys207–Cys221, and Cys211–Cys229. Asn156 carries an N-linked (GlcNAc...) asparagine glycan. A helical membrane pass occupies residues Ile240–Cys262. Topologically, residues Cys263 to Glu468 are cytoplasmic. The region spanning Met365–Leu448 is the Death domain. Phosphoserine occurs at positions 424, 463, and 466.

In terms of assembly, monomer. Homooligomers and heterooligomers with TNFRSF10B. Three TNFRSF10A molecules interact with the TNFSF10 homotrimer. Can interact with TRADD and RIPK1. Interacts with ARAP1. In the absence of stimulation, interacts with BIRC2, DDX3X and GSK3B. The interaction with BIRC2 and DDX3X is further enhanced upon receptor stimulation and accompanied by DDX3X and BIRC2 cleavage. Interacts with ZDHHC3. Interacts with PTPN6; this interaction enables the inhibition of T-cell receptor signaling via LCK. (Microbial infection) Interacts with HCMV protein UL141; this interaction prevents TNFRSF10A cell surface expression. In terms of processing, palmitoylated. Palmitoylation of TNFRSF10A is required for its association with lipid rafts, oligomerization and function in TRAIL-induced cell death. Palmitoylated by ZDHHC3. As to expression, widely expressed. High levels are found in spleen, peripheral blood leukocytes, small intestine and thymus, but also in K-562 erythroleukemia cells, MCF-7 breast carcinoma cells and activated T-cells.

Its subcellular location is the cell membrane. The protein resides in the membrane raft. The protein localises to the cytoplasm. It localises to the cytosol. Functionally, receptor for the cytotoxic ligand TNFSF10/TRAIL. The adapter molecule FADD recruits caspase-8 to the activated receptor. The resulting death-inducing signaling complex (DISC) performs caspase-8 proteolytic activation which initiates the subsequent cascade of caspases (aspartate-specific cysteine proteases) mediating apoptosis. Promotes the activation of NF-kappa-B. The protein is Tumor necrosis factor receptor superfamily member 10A (TNFRSF10A) of Homo sapiens (Human).